The chain runs to 471 residues: UDP-N-acetylmuramoylalanine--D-glutamate ligase (471 aa).

122–128 serves as a coordination point for ATP; that stretch reads GTNGKTT.

It belongs to the MurCDEF family.

It localises to the cytoplasm. The catalysed reaction is UDP-N-acetyl-alpha-D-muramoyl-L-alanine + D-glutamate + ATP = UDP-N-acetyl-alpha-D-muramoyl-L-alanyl-D-glutamate + ADP + phosphate + H(+). It functions in the pathway cell wall biogenesis; peptidoglycan biosynthesis. In terms of biological role, cell wall formation. Catalyzes the addition of glutamate to the nucleotide precursor UDP-N-acetylmuramoyl-L-alanine (UMA). This Streptomyces coelicolor (strain ATCC BAA-471 / A3(2) / M145) protein is UDP-N-acetylmuramoylalanine--D-glutamate ligase.